The following is a 390-amino-acid chain: Alanine racemase (390 aa).

Lysine 46 serves as the catalytic Proton acceptor; specific for D-alanine. Lysine 46 is subject to N6-(pyridoxal phosphate)lysine. Arginine 144 contributes to the substrate binding site. The active-site Proton acceptor; specific for L-alanine is tyrosine 275. Methionine 323 contacts substrate.

This sequence belongs to the alanine racemase family. Pyridoxal 5'-phosphate serves as cofactor.

The enzyme catalyses L-alanine = D-alanine. The protein operates within amino-acid biosynthesis; D-alanine biosynthesis; D-alanine from L-alanine: step 1/1. In terms of biological role, catalyzes the interconversion of L-alanine and D-alanine. May also act on other amino acids. This Mycolicibacterium vanbaalenii (strain DSM 7251 / JCM 13017 / BCRC 16820 / KCTC 9966 / NRRL B-24157 / PYR-1) (Mycobacterium vanbaalenii) protein is Alanine racemase (alr).